Consider the following 712-residue polypeptide: Polyphosphate kinase (712 aa).

Asn49 contributes to the ATP binding site. Mg(2+)-binding residues include Arg398 and Arg428. The Phosphohistidine intermediate role is filled by His458. Tyr491, Arg587, and His615 together coordinate ATP.

Belongs to the polyphosphate kinase 1 (PPK1) family. Requires Mg(2+) as cofactor. An intermediate of this reaction is the autophosphorylated ppk in which a phosphate is covalently linked to a histidine residue through a N-P bond.

The catalysed reaction is [phosphate](n) + ATP = [phosphate](n+1) + ADP. Functionally, catalyzes the reversible transfer of the terminal phosphate of ATP to form a long-chain polyphosphate (polyP). In Parasynechococcus marenigrum (strain WH8102), this protein is Polyphosphate kinase.